The primary structure comprises 255 residues: Ribonuclease HII (255 aa).

Positions 72-255 (RLIAGVDEAG…KTFAPVQSYC (184 aa)) constitute an RNase H type-2 domain. Asp78, Glu79, and Asp170 together coordinate a divalent metal cation.

This sequence belongs to the RNase HII family. The cofactor is Mn(2+). Mg(2+) is required as a cofactor.

It is found in the cytoplasm. It carries out the reaction Endonucleolytic cleavage to 5'-phosphomonoester.. Functionally, endonuclease that specifically degrades the RNA of RNA-DNA hybrids. The polypeptide is Ribonuclease HII (Bacillus velezensis (strain DSM 23117 / BGSC 10A6 / LMG 26770 / FZB42) (Bacillus amyloliquefaciens subsp. plantarum)).